Here is a 35-residue protein sequence, read N- to C-terminus: Delta-theraphotoxin-Hm1a (35 aa).

3 disulfide bridges follow: C2/C16, C9/C21, and C15/C28.

The protein belongs to the neurotoxin 10 (Hwtx-1) family. 09 (HaTx) subfamily. Expressed by the venom gland.

It localises to the secreted. Its function is as follows. Gating-modifier toxin that potently inhibits inactivation of the mammalian Nav1.1/SCN1A sodium channel (EC(50)=38 nM). Also moderately inhibits inactivation of Nav1.2/SCN2A (EC(50)=236 nM) and Nav1.3/SCN3A (EC(50)=220 nM) when the channels are expressed in oocytes without the beta-1 auxiliary subunit. Does not inhibit inactivation of Nav1.2/SCN2A when the channel is coexpressed with the beta-1 auxiliary subunit. When tested on Nav1.1/SCN1A channel, it enhances peak current amplitude and potently delays channel inactivation in a dose-dependent manner, leading to a large sustained current. It has no effect on the voltage-dependence of steady-state activation, and induces a depolarizing shift in the voltage dependence of inactivation. In addition, it does not modify the recovery from fast inactivation in Nav1.1/SCN1A. The binding affinity and subtype selectivity of the toxin towards Nav1.1/SCN1A channel is determined by residues within both the S1-S2 and S3-S4 loops of the domain IV voltage sensor of the channel. This toxin also weakly inhibits several subtypes of voltage-gated potassium channels. It moderately blocks Kv2.1/KCNB1 (23% inhibition at 100 nM), Kv2.2/KCNB2 (19.7% at 100 nM and 51% at 300 nM), Kv4.1/KCND1 (IC(50)=280 nM), Kv4.2/KCND2 (39% at 300 nM) and Kv4.3/KCND3 (43% at 300 nM). In vivo, intracerebroventricular injection into mice elicits convulsions, spasms, tremors and rapid death. When injected into mouse hindpaw, the toxin elicits an immediate and robust response to pain. However, intraplantar injection of toxin does not cause neurogenic inflammation or alter sensitivity to heat, indicative of a modality-specific effect on mechanosensitive neurons. In Dravet syndrome mice model, intracerebroventricular infusion of this peptide rescues mice from seizures and premature death. The polypeptide is Delta-theraphotoxin-Hm1a (Heteroscodra maculata (Togo starburst tarantula)).